The sequence spans 372 residues: Phospho-2-dehydro-3-deoxyheptonate aldolase, tyrosine-inhibited (372 aa).

The protein belongs to the class-I DAHP synthase family.

It localises to the cytoplasm. The protein localises to the nucleus. It catalyses the reaction D-erythrose 4-phosphate + phosphoenolpyruvate + H2O = 7-phospho-2-dehydro-3-deoxy-D-arabino-heptonate + phosphate. It functions in the pathway metabolic intermediate biosynthesis; chorismate biosynthesis; chorismate from D-erythrose 4-phosphate and phosphoenolpyruvate: step 1/7. Stereospecific condensation of phosphoenolpyruvate (PEP) and D-erythrose-4-phosphate (E4P) giving rise to 3-deoxy-D-arabino-heptulosonate-7-phosphate (DAHP). In Schizosaccharomyces pombe (strain 972 / ATCC 24843) (Fission yeast), this protein is Phospho-2-dehydro-3-deoxyheptonate aldolase, tyrosine-inhibited (aro4).